A 382-amino-acid chain; its full sequence is Succinyl-diaminopimelate desuccinylase (382 aa).

His68 is a Zn(2+) binding site. Asp70 is a catalytic residue. Asp101 is a Zn(2+) binding site. The Proton acceptor role is filled by Glu135. Zn(2+) is bound by residues Glu136, Glu164, and His350.

The protein belongs to the peptidase M20A family. DapE subfamily. As to quaternary structure, homodimer. Zn(2+) is required as a cofactor. Co(2+) serves as cofactor.

The catalysed reaction is N-succinyl-(2S,6S)-2,6-diaminopimelate + H2O = (2S,6S)-2,6-diaminopimelate + succinate. It participates in amino-acid biosynthesis; L-lysine biosynthesis via DAP pathway; LL-2,6-diaminopimelate from (S)-tetrahydrodipicolinate (succinylase route): step 3/3. Catalyzes the hydrolysis of N-succinyl-L,L-diaminopimelic acid (SDAP), forming succinate and LL-2,6-diaminopimelate (DAP), an intermediate involved in the bacterial biosynthesis of lysine and meso-diaminopimelic acid, an essential component of bacterial cell walls. The polypeptide is Succinyl-diaminopimelate desuccinylase (Acidithiobacillus ferrooxidans (strain ATCC 23270 / DSM 14882 / CIP 104768 / NCIMB 8455) (Ferrobacillus ferrooxidans (strain ATCC 23270))).